The following is a 476-amino-acid chain: Nitrosuccinate lyase (476 aa).

Positions 137, 140, and 201 each coordinate fumarate. Catalysis depends on Ser-302, which acts as the Proton acceptor. Fumarate is bound by residues Lys-308 and Asn-310. Catalysis depends on Arg-341, which acts as the Proton donor.

This sequence belongs to the class-II fumarase/aspartase family. As to quaternary structure, homotetramer.

The enzyme catalyses 2-nitrobutanedioate = fumarate + nitrite + H(+). The protein operates within antibiotic biosynthesis. Its function is as follows. Part of a gene cluster involved in the biosynthesis of cremeomycin, a light-sensitive o-diazoquinone with antibacterial and antiproliferative effects. Catalyzes the formation of nitrous acid from nitrosuccinic acid (2-nitrobutanedioate) by elimination of its nitro group. The sequence is that of Nitrosuccinate lyase from Streptomyces cremeus.